A 164-amino-acid polypeptide reads, in one-letter code: ATP synthase subunit b (164 aa).

Residues 6 to 26 (GELVGNFILVTGSVIVLLLLI) traverse the membrane as a helical segment.

The protein belongs to the ATPase B chain family. As to quaternary structure, F-type ATPases have 2 components, F(1) - the catalytic core - and F(0) - the membrane proton channel. F(1) has five subunits: alpha(3), beta(3), gamma(1), delta(1), epsilon(1). F(0) has three main subunits: a(1), b(2) and c(10-14). The alpha and beta chains form an alternating ring which encloses part of the gamma chain. F(1) is attached to F(0) by a central stalk formed by the gamma and epsilon chains, while a peripheral stalk is formed by the delta and b chains.

Its subcellular location is the cell membrane. Functionally, f(1)F(0) ATP synthase produces ATP from ADP in the presence of a proton or sodium gradient. F-type ATPases consist of two structural domains, F(1) containing the extramembraneous catalytic core and F(0) containing the membrane proton channel, linked together by a central stalk and a peripheral stalk. During catalysis, ATP synthesis in the catalytic domain of F(1) is coupled via a rotary mechanism of the central stalk subunits to proton translocation. Component of the F(0) channel, it forms part of the peripheral stalk, linking F(1) to F(0). In Streptococcus pyogenes serotype M3 (strain ATCC BAA-595 / MGAS315), this protein is ATP synthase subunit b.